The following is an 839-amino-acid chain: Probable beta-glucosidase I (839 aa).

The N-linked (GlcNAc...) asparagine glycan is linked to Asn-197. The active site involves Asp-225. The PA14 domain maps to 395-555 (DGKTGFSFKV…GQEELISNAV (161 aa)). N-linked (GlcNAc...) asparagine glycosylation is present at Asn-620.

The protein belongs to the glycosyl hydrolase 3 family.

It is found in the secreted. The enzyme catalyses Hydrolysis of terminal, non-reducing beta-D-glucosyl residues with release of beta-D-glucose.. It participates in glycan metabolism; cellulose degradation. In terms of biological role, beta-glucosidases are one of a number of cellulolytic enzymes involved in the degradation of cellulosic biomass. Catalyzes the last step releasing glucose from the inhibitory cellobiose. This Aspergillus flavus (strain ATCC 200026 / FGSC A1120 / IAM 13836 / NRRL 3357 / JCM 12722 / SRRC 167) protein is Probable beta-glucosidase I (bglI).